The sequence spans 305 residues: UDP-3-O-acyl-N-acetylglucosamine deacetylase (305 aa).

Residues H79, H238, and D242 each coordinate Zn(2+). H265 acts as the Proton donor in catalysis.

It belongs to the LpxC family. It depends on Zn(2+) as a cofactor.

The enzyme catalyses a UDP-3-O-[(3R)-3-hydroxyacyl]-N-acetyl-alpha-D-glucosamine + H2O = a UDP-3-O-[(3R)-3-hydroxyacyl]-alpha-D-glucosamine + acetate. It participates in glycolipid biosynthesis; lipid IV(A) biosynthesis; lipid IV(A) from (3R)-3-hydroxytetradecanoyl-[acyl-carrier-protein] and UDP-N-acetyl-alpha-D-glucosamine: step 2/6. In terms of biological role, catalyzes the hydrolysis of UDP-3-O-myristoyl-N-acetylglucosamine to form UDP-3-O-myristoylglucosamine and acetate, the committed step in lipid A biosynthesis. The chain is UDP-3-O-acyl-N-acetylglucosamine deacetylase from Erwinia tasmaniensis (strain DSM 17950 / CFBP 7177 / CIP 109463 / NCPPB 4357 / Et1/99).